Reading from the N-terminus, the 182-residue chain is dCTP deaminase, dUMP-forming (182 aa).

Residues 96-101 (RSSIGR), aspartate 113, 121-123 (TLE), glutamine 142, tyrosine 156, and glutamine 163 contribute to the dCTP site. Glutamate 123 (proton donor/acceptor) is an active-site residue.

Belongs to the dCTP deaminase family. Homotrimer.

It catalyses the reaction dCTP + 2 H2O = dUMP + NH4(+) + diphosphate. It functions in the pathway pyrimidine metabolism; dUMP biosynthesis; dUMP from dCTP: step 1/1. Functionally, bifunctional enzyme that catalyzes both the deamination of dCTP to dUTP and the hydrolysis of dUTP to dUMP without releasing the toxic dUTP intermediate. The chain is dCTP deaminase, dUMP-forming from Halothermothrix orenii (strain H 168 / OCM 544 / DSM 9562).